We begin with the raw amino-acid sequence, 156 residues long: Zinc finger SWIM domain-containing protein 7 homolog (156 aa).

The segment at Tyr-82 to Ile-120 adopts an SWIM-type zinc-finger fold.

It belongs to the SWS1 family.

Its subcellular location is the nucleus. May be involved in the homologous recombination repair (HRR) pathway of double-stranded DNA breaks arising during DNA replication or induced by DNA-damaging agents. This is Zinc finger SWIM domain-containing protein 7 homolog (zswim7) from Dictyostelium discoideum (Social amoeba).